The chain runs to 529 residues: tRNA-2-methylthio-N(6)-dimethylallyladenosine synthase (529 aa).

An MTTase N-terminal domain is found at 18 to 134 (RTYQVRTYGC…LPTLLERARH (117 aa)). 6 residues coordinate [4Fe-4S] cluster: C27, C63, C97, C171, C175, and C178. The Radical SAM core domain occupies 157–404 (RESAYAGWVS…IELQERISLE (248 aa)). Positions 407–486 (QAQVGRTLEL…PHHLIADGAL (80 aa)) constitute a TRAM domain.

Belongs to the methylthiotransferase family. MiaB subfamily. As to quaternary structure, monomer. It depends on [4Fe-4S] cluster as a cofactor.

It localises to the cytoplasm. It carries out the reaction N(6)-dimethylallyladenosine(37) in tRNA + (sulfur carrier)-SH + AH2 + 2 S-adenosyl-L-methionine = 2-methylsulfanyl-N(6)-dimethylallyladenosine(37) in tRNA + (sulfur carrier)-H + 5'-deoxyadenosine + L-methionine + A + S-adenosyl-L-homocysteine + 2 H(+). Catalyzes the methylthiolation of N6-(dimethylallyl)adenosine (i(6)A), leading to the formation of 2-methylthio-N6-(dimethylallyl)adenosine (ms(2)i(6)A) at position 37 in tRNAs that read codons beginning with uridine. The sequence is that of tRNA-2-methylthio-N(6)-dimethylallyladenosine synthase from Mycobacterium sp. (strain KMS).